Reading from the N-terminus, the 922-residue chain is Isoleucine--tRNA ligase (922 aa).

The short motif at 57-67 (PYANGDIHLGH) is the 'HIGH' region element. An L-isoleucyl-5'-AMP-binding site is contributed by Glu-553. The short motif at 594–598 (KMSKS) is the 'KMSKS' region element. ATP is bound at residue Lys-597. 4 residues coordinate Zn(2+): Cys-892, Cys-895, Cys-912, and Cys-915.

The protein belongs to the class-I aminoacyl-tRNA synthetase family. IleS type 1 subfamily. In terms of assembly, monomer. Requires Zn(2+) as cofactor.

It is found in the cytoplasm. The enzyme catalyses tRNA(Ile) + L-isoleucine + ATP = L-isoleucyl-tRNA(Ile) + AMP + diphosphate. In terms of biological role, catalyzes the attachment of isoleucine to tRNA(Ile). As IleRS can inadvertently accommodate and process structurally similar amino acids such as valine, to avoid such errors it has two additional distinct tRNA(Ile)-dependent editing activities. One activity is designated as 'pretransfer' editing and involves the hydrolysis of activated Val-AMP. The other activity is designated 'posttransfer' editing and involves deacylation of mischarged Val-tRNA(Ile). The protein is Isoleucine--tRNA ligase of Desulfitobacterium hafniense (strain Y51).